Consider the following 662-residue polypeptide: UPF0313 protein CPF_1407 (662 aa).

A Radical SAM core domain is found at 296 to 567 (AIEEVKFSIV…AMQRALLQFK (272 aa)). 3 residues coordinate [4Fe-4S] cluster: cysteine 310, cysteine 314, and cysteine 317. The disordered stretch occupies residues 596–662 (IRDKNSFGKG…QRSSKGKKRR (67 aa)). Residues 618–632 (SRNENSGRRESEDKK) show a composition bias toward basic and acidic residues. Positions 633 to 644 (RSSHSKKQRGNK) are enriched in basic residues.

This sequence belongs to the UPF0313 family. It depends on [4Fe-4S] cluster as a cofactor.

The polypeptide is UPF0313 protein CPF_1407 (Clostridium perfringens (strain ATCC 13124 / DSM 756 / JCM 1290 / NCIMB 6125 / NCTC 8237 / Type A)).